The following is a 115-amino-acid chain: Large ribosomal subunit protein bL19 (115 aa).

Belongs to the bacterial ribosomal protein bL19 family.

This protein is located at the 30S-50S ribosomal subunit interface and may play a role in the structure and function of the aminoacyl-tRNA binding site. In Francisella tularensis subsp. mediasiatica (strain FSC147), this protein is Large ribosomal subunit protein bL19.